A 653-amino-acid polypeptide reads, in one-letter code: Choline transporter-like protein 1 (653 aa).

The N-myristoyl glycine moiety is linked to residue Gly-2. The Cytoplasmic portion of the chain corresponds to 2–29 (GCCSSASAAQSSKREWKPLEDRSCTDIP). A helical transmembrane segment spans residues 30-50 (WLLLFVLFCIGMGFICGFSVA). At 51–211 (TGAAARLVSG…RLISGVMTSK (161 aa)) the chain is on the mitochondrial intermembrane side. Residues 212-232 (EIILGLCLLSLVLSMILMVII) traverse the membrane as a helical segment. The Cytoplasmic portion of the chain corresponds to 233–237 (RYISR). The helical transmembrane segment at 238-258 (VLVWILTVLVILGSLGGTGVL) threads the bilayer. Residues 259 to 287 (WWLYAKQRRSPKEAVIPEQLQIAEDNLRA) are Mitochondrial intermembrane-facing. A helical membrane pass occupies residues 288–308 (LLIYAISATVFTVILFLIMLV). Over 309–314 (MRKRVA) the chain is Cytoplasmic. A helical membrane pass occupies residues 315-335 (LTIALFHVAGKVFIHLPLLVF). The Mitochondrial intermembrane segment spans residues 336 to 337 (QP). Residues 338–358 (FWTFFALVLFWAYWIMTLLFL) traverse the membrane as a helical segment. The Cytoplasmic segment spans residues 359-379 (GTTGSAVQNEQGFVEYKISGP). A helical transmembrane segment spans residues 380–400 (LQYMWWYHVVGLIWISEFILA). Residues 401–536 (CQQMTVAGAV…RVAAINTVGD (136 aa)) are Mitochondrial intermembrane-facing. Residues 537–557 (FMLFLGKVLIVCSTGLAGIML) traverse the membrane as a helical segment. Over 558 to 565 (LNYQQDYT) the chain is Cytoplasmic. Residues 566–586 (VWVLPLIIVCLFAFLVAHCFL) traverse the membrane as a helical segment. At 587 to 653 (SIYEMVVDVL…RELKPMLRKR (67 aa)) the chain is on the mitochondrial intermembrane side.

It belongs to the CTL (choline transporter-like) family. In terms of tissue distribution, specifically abundant in skeletal muscle (at protein level).

It is found in the cell membrane. The protein localises to the mitochondrion outer membrane. The catalysed reaction is choline(out) + n H(+)(in) = choline(in) + n H(+)(out). It carries out the reaction ethanolamine(out) + n H(+)(in) = ethanolamine(in) + n H(+)(out). Its function is as follows. Choline/H+ antiporter. Also acts as a high-affinity ethanolamine/H+ antiporter, regulating the supply of extracellular ethanolamine (Etn) for the CDP-Etn pathway, redistribute intracellular Etn and balance the CDP-Cho and CDP-Etn arms of the Kennedy pathway. Involved in membrane synthesis and myelin production. This Mus musculus (Mouse) protein is Choline transporter-like protein 1 (Slc44a1).